The chain runs to 371 residues: Gustatory and pheromone receptor 39a, isoform A (371 aa).

The Cytoplasmic portion of the chain corresponds to 1–41; that stretch reads MSKVCRDLRIYLRLLHIMGMMCWHFDSDHCQLVATSGSERY. The chain crosses the membrane as a helical span at residues 42–62; the sequence is AVVYAGCILVSTTAGFIFALL. The Extracellular portion of the chain corresponds to 63–80; sequence HPSRFHIAIYNQTGNFYE. N-linked (GlcNAc...) asparagine glycosylation is present at asparagine 73. A helical membrane pass occupies residues 81-101; it reads AVIFRSTCVVLFLVYVILYAW. The Cytoplasmic segment spans residues 102–127; sequence RHRYRDLVQHILRLNRRCASSCTNQQ. A helical transmembrane segment spans residues 128-148; the sequence is FLHNIILYGMLTILCFGNYLH. The Extracellular segment spans residues 149–161; it reads GYTRAGLATLPLA. The chain crosses the membrane as a helical span at residues 162-182; it reads LCMLVYIFAFLVLCLLLMFFV. The Cytoplasmic portion of the chain corresponds to 183–228; the sequence is SLKQVMTAGLIHYNQQLCQGDLISGLRGRQQILKLCGGELNECFGL. Residues 229-249 traverse the membrane as a helical segment; sequence LMLPIVALVLLMAPSGPFFLI. Residues 250-263 lie on the Extracellular side of the membrane; it reads STVLEGKFRPDECL. The chain crosses the membrane as a helical span at residues 264–284; the sequence is IMLLTSSTWDTPWMIMLVLML. Residues 285–340 lie on the Cytoplasmic side of the membrane; it reads RTNGISEEANKTAKMLTKVPRTGTGLDRMIEKFLLKNLRQKPILTAYGFFALDKST. A helical membrane pass occupies residues 341–361; the sequence is LFKLFTAIFTYMVILVQFKEM. Residues 362–371 lie on the Extracellular side of the membrane; the sequence is ENSTKSINKF. An N-linked (GlcNAc...) asparagine glycan is attached at asparagine 363.

Belongs to the insect chemoreceptor superfamily. Gustatory receptor (GR) family. Gr21a subfamily. In terms of tissue distribution, expressed in the adult labellar chemosensory neurons, and adult thorax and wing. In larvae, is expressed in neurons of the posterior pharyngeal sense organ.

Its subcellular location is the cell membrane. Functionally, gustatory receptor which mediates acceptance or avoidance behavior, depending on its substrates. Plays a role in sustaining courtship behavior in males, possibly through the reception of a stimulating arrestant pheromone. This is Gustatory and pheromone receptor 39a, isoform A (Gr39a) from Drosophila melanogaster (Fruit fly).